The chain runs to 551 residues: Calnexin homolog (551 aa).

An N-terminal signal peptide occupies residues 1 to 26 (MVDRKEIPLAMGLLAVLLFFVASSSS). The Lumenal segment spans residues 27–480 (FHLVRASDEV…EKGEKQPNLT (454 aa)). Ca(2+) contacts are provided by S44 and D75. Cysteines 118 and 153 form a disulfide. 2 residues coordinate an alpha-D-glucoside: Y122 and K124. A glycan (N-linked (GlcNAc...) asparagine) is linked at N140. An alpha-D-glucoside contacts are provided by Y144 and D151. Positions 226 to 330 (ALIPSKTIPD…CGEWKRPTKS (105 aa)) are disordered. Residues 233 to 364 (IPDPDDKKPE…QEIPNPEYFE (132 aa)) form a p domain (Extended arm) region. 2 stretches are compositionally biased toward basic and acidic residues: residues 234–269 (PDPD…PREI) and 276–295 (KPEP…AKPE). 5 tandem repeats follow at residues 235-246 (DPDDKKPEDWDE), 252-263 (DPEAVKPEDWDE), 271-282 (DEEAEKPEPWLD), 289-299 (DPEAKPEDWDD), and 303-313 (GEWEAPKIENP). 4 X approximate repeats stretches follow at residues 235-299 (DPDD…DWDD) and 303-360 (GEWE…IPNP). Over residues 296-305 (DWDDEEDGEW) the composition is skewed to acidic residues. C315 and C321 are disulfide-bonded. Tandem repeats lie at residues 322-332 (GEWKRPTKSNP), 336-346 (GKWSAPYIDNP), and 350-360 (GIWKPQEIPNP). E379 lines the an alpha-D-glucoside pocket. Position 390 (D390) interacts with Ca(2+). N478 carries N-linked (GlcNAc...) asparagine glycosylation. A helical transmembrane segment spans residues 481-501 (IGIIVSVVIVFVSIFFRLIFG). At 502-551 (GKKPANVEANVEKKKTNTETTSKQDGGEKEDNKEKEETANPPRRRPKRDN) the chain is on the cytoplasmic side. The tract at residues 510-551 (ANVEKKKTNTETTSKQDGGEKEDNKEKEETANPPRRRPKRDN) is disordered. Residues 526-539 (DGGEKEDNKEKEET) are compositionally biased toward basic and acidic residues.

It belongs to the calreticulin family. As to expression, in vegetative and flowering tissues.

The protein resides in the endoplasmic reticulum membrane. Functionally, calcium-binding protein that interacts with newly synthesized monoglucosylated glycoproteins in the endoplasmic reticulum. It may act in assisting protein assembly and/or in the retention within the ER of unassembled protein subunits. It seems to play a major role in the quality control apparatus of the ER by the retention of incorrectly folded proteins. The chain is Calnexin homolog from Pisum sativum (Garden pea).